Consider the following 710-residue polypeptide: PWWP domain-containing DNA repair factor 3A (710 aa).

Residues 106 to 160 (QESSAGTGRADRSLRGKPMEHVSSPCDSNSSSLPRGDVLGSSRPHRRRPCVQQSL) form a disordered region. Residues 114 to 125 (RADRSLRGKPME) show a composition bias toward basic and acidic residues. Positions 128–137 (SSPCDSNSSS) are enriched in low complexity. Ser-161 is subject to Phosphoserine. 2 disordered regions span residues 177 to 204 (KKGL…ESGS) and 230 to 398 (NGSS…EEPP). Low complexity predominate over residues 288-297 (PSACSEPGEC). Ser-374 and Ser-375 each carry phosphoserine. A compositionally biased stretch (polar residues) spans 375-385 (SEESMGSNSMR). In terms of domain architecture, PWWP spans 411 to 472 (VGMLVWHKHK…KHFDCKEKQT (62 aa)).

Belongs to the PWWP3A family. Interacts with TP53BP1 (via BRCT domain); the interaction is not dependent on its phosphorylation status. Binds nucleosomes. Interacts with trimethylated 'Lys-36' of histone H3 (H3K36me3) (in vitro).

Its subcellular location is the nucleus. Its function is as follows. Involved in the DNA damage response pathway by contributing to the maintenance of chromatin architecture. Recruited to the vicinity of DNA breaks by TP53BP1 and plays an accessory role to facilitate damage-induced chromatin changes and promoting chromatin relaxation. Required for efficient DNA repair and cell survival following DNA damage. The polypeptide is PWWP domain-containing DNA repair factor 3A (Homo sapiens (Human)).